A 178-amino-acid chain; its full sequence is ATP synthase subunit delta (178 aa).

Belongs to the ATPase delta chain family. In terms of assembly, F-type ATPases have 2 components, F(1) - the catalytic core - and F(0) - the membrane proton channel. F(1) has five subunits: alpha(3), beta(3), gamma(1), delta(1), epsilon(1). F(0) has three main subunits: a(1), b(2) and c(10-14). The alpha and beta chains form an alternating ring which encloses part of the gamma chain. F(1) is attached to F(0) by a central stalk formed by the gamma and epsilon chains, while a peripheral stalk is formed by the delta and b chains.

The protein localises to the cell inner membrane. In terms of biological role, f(1)F(0) ATP synthase produces ATP from ADP in the presence of a proton or sodium gradient. F-type ATPases consist of two structural domains, F(1) containing the extramembraneous catalytic core and F(0) containing the membrane proton channel, linked together by a central stalk and a peripheral stalk. During catalysis, ATP synthesis in the catalytic domain of F(1) is coupled via a rotary mechanism of the central stalk subunits to proton translocation. Functionally, this protein is part of the stalk that links CF(0) to CF(1). It either transmits conformational changes from CF(0) to CF(1) or is implicated in proton conduction. The sequence is that of ATP synthase subunit delta from Ectopseudomonas mendocina (strain ymp) (Pseudomonas mendocina).